The sequence spans 117 residues: Large ribosomal subunit protein uL18 (117 aa).

The protein belongs to the universal ribosomal protein uL18 family. In terms of assembly, part of the 50S ribosomal subunit; part of the 5S rRNA/L5/L18/L25 subcomplex. Contacts the 5S and 23S rRNAs.

Functionally, this is one of the proteins that bind and probably mediate the attachment of the 5S RNA into the large ribosomal subunit, where it forms part of the central protuberance. The sequence is that of Large ribosomal subunit protein uL18 from Yersinia pseudotuberculosis serotype O:1b (strain IP 31758).